Here is a 1237-residue protein sequence, read N- to C-terminus: Anion exchange protein 2 (1237 aa).

The tract at residues 1 to 237 (MSSAPRRPAS…SYNLQERRRI (237 aa)) is disordered. The Cytoplasmic portion of the chain corresponds to 1–704 (MSSAPRRPAS…DFRDALDPQC (704 aa)). 2 stretches are compositionally biased toward basic and acidic residues: residues 37–49 (ELHRTLGVERFEE) and 58–75 (GGEEPGRSYGEEDFEYHR). 2 stretches are compositionally biased toward basic residues: residues 76-85 (QSSHHIHHPL) and 94-110 (RRRKTPQGPGRKSRRRP). Phosphoserine occurs at positions 113, 132, 144, 170, and 172. The segment covering 120–133 (TIEEGEEDEDEASE) has biased composition (acidic residues). The span at 137–151 (ARAPTQPSPASTPSS) shows a compositional bias: low complexity. The segment covering 205 to 215 (GTAGGDDGGAS) has biased composition (gly residues). Ser239 is modified (phosphoserine). Thr253 carries the phosphothreonine modification. An N6-methyllysine modification is found at Lys270. Residues 286 to 316 (RKNAKGSVQSGREGREPGPTPRARPRAPHKP) form a disordered region. The residue at position 439 (Ser439) is a Phosphoserine. Positions 445-466 (SLLGHHHGQGAESDPHVTEPLI) are disordered. Residues 704–1237 (CLAAVIFIYF…DEYNEMPMPV (534 aa)) are membrane (anion exchange). The next 4 membrane-spanning stretches (helical) occupy residues 705–725 (LAAVIFIYFAALSPAITFGGL), 750–770 (FCLLGAQPLLVIGFSGPLLVF), 792–812 (IGFWLVLLALLMVALEGSFLV), and 822–842 (IFAFLISLIFIYETFYKLVKI). The Extracellular portion of the chain corresponds to 843-893 (FQEHPLHGCSVSNSSEADSGDNATWAGTRVTLGLGNGSSAGPAGQGRPRGQ). N-linked (GlcNAc...) asparagine glycosylation is found at Asn855, Asn864, and Asn878. The chain crosses the membrane as a helical span at residues 894 to 914 (PNTALLSLVLMAGTFFIAFFL). Over 915 to 929 (RKFKNGRFFPGRVRR) the chain is Cytoplasmic. Transmembrane regions (helical) follow at residues 930 to 950 (VIGDFGVPIAILIMVLVDYSI), 985 to 1005 (FPVWMMVASLLPAILVFILIF), 1032 to 1052 (LLLIVAMGGICALFGLPWLAA), 1086 to 1106 (RVTGLLVALLVGLSIVIGDLL), and 1109 to 1129 (IPLAVLFGIFLYMGVTSLNGI). Cys1169 carries the S-palmitoyl cysteine lipid modification. The chain crosses the membrane as a helical span at residues 1170–1190 (LALLWAVMSTAASLAFPFILI).

Belongs to the anion exchanger (TC 2.A.31) family.

Its subcellular location is the apical cell membrane. The protein localises to the basolateral cell membrane. The enzyme catalyses hydrogencarbonate(in) + chloride(out) = hydrogencarbonate(out) + chloride(in). Sodium-independent anion exchanger which mediates the electroneutral exchange of chloride for bicarbonate ions across the cell membrane. Plays an important role in osteoclast differentiation and function. Regulates bone resorption and calpain-dependent actin cytoskeleton organization in osteoclasts via anion exchange-dependent control of pH. Essential for intracellular pH regulation in CD8(+) T-cells upon CD3 stimulation, modulating CD8(+) T-cell response. The sequence is that of Anion exchange protein 2 (SLC4A2) from Equus caballus (Horse).